A 333-amino-acid chain; its full sequence is T-cell surface glycoprotein CD1b-2 (333 aa).

Residues 1-20 form the signal peptide; the sequence is MLLLPLLLLGVILPGGDNED. Over 21-302 the chain is Extracellular; it reads VFQGPTSFHL…LYWGHPTSIG (282 aa). Asn38, Asn75, and Asn146 each carry an N-linked (GlcNAc...) asparagine glycan. 3 disulfides stabilise this stretch: Cys120–Cys184, Cys149–Cys163, and Cys224–Cys279. One can recognise an Ig-like domain in the interval 185–295; that stretch reads PRYLLGVLDA…LGDQDIILYW (111 aa). A helical membrane pass occupies residues 303–323; sequence LILVAIIVPSLILSICLALWF. Over 324 to 333 the chain is Cytoplasmic; it reads WRRWSYQNIL. The Internalization signal signature appears at 329–332; the sequence is YQNI.

As to quaternary structure, heterodimer with B2M (beta-2-microglobulin). Interacts with saposin C.

Its subcellular location is the cell membrane. It is found in the endosome membrane. The protein localises to the lysosome membrane. Functionally, antigen-presenting protein that binds self and non-self lipid and glycolipid antigens and presents them to T-cell receptors on natural killer T-cells. The protein is T-cell surface glycoprotein CD1b-2 of Ovis aries (Sheep).